A 673-amino-acid chain; its full sequence is UvrABC system protein B (673 aa).

Residues Glu26–Arg183 form the Helicase ATP-binding domain. Gly39–Thr46 contacts ATP. Residues Tyr92–Val115 carry the Beta-hairpin motif. Residues Gln431 to Leu597 enclose the Helicase C-terminal domain. In terms of domain architecture, UVR spans Gln633 to Leu668.

The protein belongs to the UvrB family. As to quaternary structure, forms a heterotetramer with UvrA during the search for lesions. Interacts with UvrC in an incision complex.

The protein localises to the cytoplasm. Functionally, the UvrABC repair system catalyzes the recognition and processing of DNA lesions. A damage recognition complex composed of 2 UvrA and 2 UvrB subunits scans DNA for abnormalities. Upon binding of the UvrA(2)B(2) complex to a putative damaged site, the DNA wraps around one UvrB monomer. DNA wrap is dependent on ATP binding by UvrB and probably causes local melting of the DNA helix, facilitating insertion of UvrB beta-hairpin between the DNA strands. Then UvrB probes one DNA strand for the presence of a lesion. If a lesion is found the UvrA subunits dissociate and the UvrB-DNA preincision complex is formed. This complex is subsequently bound by UvrC and the second UvrB is released. If no lesion is found, the DNA wraps around the other UvrB subunit that will check the other stand for damage. This chain is UvrABC system protein B, found in Citrobacter koseri (strain ATCC BAA-895 / CDC 4225-83 / SGSC4696).